A 454-amino-acid polypeptide reads, in one-letter code: Metalloprotease MTH_856 (454 aa).

Positions Gln-92–Pro-115 are disordered.

The protein belongs to the peptidase U62 family.

Its function is as follows. Probable metalloprotease. The protein is Metalloprotease MTH_856 of Methanothermobacter thermautotrophicus (strain ATCC 29096 / DSM 1053 / JCM 10044 / NBRC 100330 / Delta H) (Methanobacterium thermoautotrophicum).